A 525-amino-acid chain; its full sequence is Arylsulfatase G (525 aa).

An N-terminal signal peptide occupies residues 1–16; sequence MGWLFLKVLLAGVSFS. Aspartate 44, aspartate 45, and cysteine 84 together coordinate Ca(2+). Cysteine 84 functions as the Nucleophile in the catalytic mechanism. At cysteine 84 the chain carries 3-oxoalanine (Cys). N-linked (GlcNAc...) asparagine glycosylation is present at asparagine 117. Lysine 137 contributes to the substrate binding site. Residue histidine 139 is part of the active site. Serine 162 contacts substrate. A glycan (N-linked (GlcNAc...) asparagine) is linked at asparagine 215. Histidine 251 serves as a coordination point for substrate. 2 residues coordinate Ca(2+): aspartate 302 and asparagine 303. Asparagine 356 and asparagine 497 each carry an N-linked (GlcNAc...) asparagine glycan.

It belongs to the sulfatase family. Ca(2+) serves as cofactor. N-glycosylated. N-glycosylated with both high mannose and complex type sugars. In terms of processing, the conversion to 3-oxoalanine (also known as C-formylglycine, FGly), of a serine or cysteine residue in prokaryotes and of a cysteine residue in eukaryotes, is critical for catalytic activity. Post-translationally, the 63-kDa precursor undergoes proteolytic processing in two steps, yielding two fragments in the first step (apparent molecular masses of 44 and 18 kDa). In the second step, the 44-kDa fragment is processed further to the 34- and 10-kDa chains. The 10-kDa chain is a cleavage product of the 44-kDa fragment but linked to the 18-kDa chain through a disulfide bridge. As to expression, widely expressed, with very low expression in brain, lung, heart and skeletal muscle.

The protein localises to the lysosome. The enzyme catalyses an aryl sulfate + H2O = a phenol + sulfate + H(+). It catalyses the reaction Hydrolysis of the 3-sulfate groups of the N-sulfo-D-glucosamine 3-O-sulfate units of heparin.. With respect to regulation, inhibited by phosphate. The phosphate forms a covalent bond with the active site 3-oxoalanine. Its function is as follows. Displays arylsulfatase activity at acidic pH towards artificial substrates, such as p-nitrocatechol sulfate and also, but with a lower activity towards p-nitrophenyl sulfate and 4-methylumbelliferyl sulfate. Catalyzes the hydrolysis of the 3-sulfate groups of the N-sulfo-D-glucosamine 3-O-sulfate units of heparin. The chain is Arylsulfatase G (ARSG) from Homo sapiens (Human).